Consider the following 213-residue polypeptide: Putative amidate substrates transporter protein (213 aa).

Helical transmembrane passes span 4 to 20 (VGLF…GLML), 32 to 48 (LNFF…TVLI), 56 to 72 (AVIF…FTYL), 116 to 132 (VIWL…FLLL), 146 to 162 (VAVA…AFLI), and 172 to 188 (LPAA…VVLA).

Belongs to the AmiS/UreI family.

It localises to the cell membrane. Its function is as follows. Possible transporter that might be responsible for the adsorption of amidase substrates or release of their hydrolysis products. The protein is Putative amidate substrates transporter protein of Mycolicibacterium smegmatis (Mycobacterium smegmatis).